The primary structure comprises 472 residues: FAD-dependent monooxygenase dpmaE (472 aa).

The signal sequence occupies residues 1-24 (MSQRQFKVIIIGGSVTGLTLAHSL). Residues E35, G49, and R108 each contribute to the FAD site. N-linked (GlcNAc...) asparagine glycans are attached at residues N128 and N179. Positions 305 and 318 each coordinate FAD. The N-linked (GlcNAc...) asparagine glycan is linked to N369. The helical transmembrane segment at 440–460 (LLPLMFTLPLLYFGLSWIVGI) threads the bilayer.

This sequence belongs to the paxM FAD-dependent monooxygenase family. Requires FAD as cofactor.

The protein resides in the membrane. It functions in the pathway secondary metabolite biosynthesis; terpenoid biosynthesis. Its function is as follows. FAD-dependent monooxygenase; part of the gene cluster that mediates the biosynthesis of the diterpenoid pyrones subglutinols A and B. The first step of the pathway is the synthesis of the alpha-pyrone moiety by the polyketide synthase dpmaA via condensation of one acetyl-CoA starter unit with 3 malonyl-CoA units and 2 methylations. The alpha-pyrone is then combined with geranylgeranyl pyrophosphate (GGPP) formed by the GGPP synthase dpmaD through the action of the prenyltransferase dpmaC to yield a linear alpha-pyrone diterpenoid. Subsequent steps in the diterpenoid pyrone biosynthetic pathway involve the decalin core formation, which is initiated by the epoxidation of the C10-C11 olefin by the FAD-dependent oxidoreductase dpmaE, and is followed by a cyclization cascade catalyzed by the terpene cyclase dpmaB. The dehydrogenase dpmaF is then involved in tetrahydrofuran (THF) ring formation at the C5 unit to complete the formation of subglutinols A and B. The chain is FAD-dependent monooxygenase dpmaE from Metarhizium anisopliae (Entomophthora anisopliae).